A 203-amino-acid polypeptide reads, in one-letter code: Ras-like protein 1 (203 aa).

17–24 (GGGGVGKS) lines the GTP pocket. The Effector region signature appears at 39-47 (YDPTIEDSY). GTP is bound by residues 64–68 (DTAGQ) and 123–126 (NKCD). C200 is modified (cysteine methyl ester). C200 carries S-farnesyl cysteine lipidation. The propeptide at 201 to 203 (ILM) is removed in mature form.

It belongs to the small GTPase superfamily. Ras family.

It is found in the cell membrane. The enzyme catalyses GTP + H2O = GDP + phosphate + H(+). With respect to regulation, alternates between an inactive form bound to GDP and an active form bound to GTP. Activated by a guanine nucleotide-exchange factor (GEF) and inactivated by a GTPase-activating protein (GAP). In Mucor circinelloides f. lusitanicus (Mucor racemosus var. lusitanicus), this protein is Ras-like protein 1 (RAS1).